The chain runs to 542 residues: Chaperonin GroEL 3 (542 aa).

ATP-binding positions include 29-32 (TLGP), 86-90 (DGTTT), glycine 413, 477-479 (NAA), and aspartate 493.

Belongs to the chaperonin (HSP60) family. In terms of assembly, forms a cylinder of 14 subunits composed of two heptameric rings stacked back-to-back. Interacts with the co-chaperonin GroES.

It localises to the cytoplasm. It catalyses the reaction ATP + H2O + a folded polypeptide = ADP + phosphate + an unfolded polypeptide.. In terms of biological role, together with its co-chaperonin GroES, plays an essential role in assisting protein folding. The GroEL-GroES system forms a nano-cage that allows encapsulation of the non-native substrate proteins and provides a physical environment optimized to promote and accelerate protein folding. This Frankia alni (strain DSM 45986 / CECT 9034 / ACN14a) protein is Chaperonin GroEL 3.